A 358-amino-acid polypeptide reads, in one-letter code: Trace amine-associated receptor 7b (358 aa).

Residues 1-47 are Extracellular-facing; it reads MATDDDRFPWDQDSILSRDLLSASSMQLCYEKLNRSCVRSPYSPGPR. Residue Asn-34 is glycosylated (N-linked (GlcNAc...) asparagine). Intrachain disulfides connect Cys-37–Cys-201 and Cys-120–Cys-205. Residues 48–68 traverse the membrane as a helical segment; it reads LILYAVFGFGAVLAVCGNLLV. The Cytoplasmic segment spans residues 69 to 83; sequence MTSILHFRQLHSPAN. The chain crosses the membrane as a helical span at residues 84 to 104; that stretch reads FLVASLACADFLVGLTVMPFS. The Extracellular portion of the chain corresponds to 105-125; it reads MVRSVEGCWYFGDIYCKFHSS. A helical membrane pass occupies residues 126-147; the sequence is FDGSFCYSSIFHLCFISADRYI. The Cytoplasmic segment spans residues 148-166; that stretch reads AVSDPLIYPTRFTASVSGK. Residues 167–187 form a helical membrane-spanning segment; the sequence is CITFSWLLSIIYSFSLFYTGV. The Extracellular portion of the chain corresponds to 188 to 211; it reads NEAGLEDLVSALTCVGGCQIAVNQ. A glycan (N-linked (GlcNAc...) asparagine) is linked at Asn-210. The helical transmembrane segment at 212–232 threads the bilayer; that stretch reads SWVFINFLLFLVPALVMMTVY. Over 233 to 274 the chain is Cytoplasmic; that stretch reads SKIFLIAKQQAQNIEKMGKQTARASESYKDRVAKRERKAAKT. Residues 275 to 295 traverse the membrane as a helical segment; that stretch reads LGIAVAAFLLSWLPYFIDSII. The Extracellular segment spans residues 296–309; sequence DAFLGFVTPTYVYE. Residues 310-332 form a helical membrane-spanning segment; the sequence is ILVWIGYYNSAMNPLIYAFFYPW. Topologically, residues 333-358 are cytoplasmic; it reads FRKAIKLIVTGKILRENSSATNLFPE.

This sequence belongs to the G-protein coupled receptor 1 family.

It localises to the cell membrane. Olfactory receptor specific for N,N-dimethylalkylamines trace amines, such as N,N-dimethylcyclohexylamine. Trace amine compounds are enriched in animal body fluids and act on trace amine-associated receptors (TAARs) to elicit both intraspecific and interspecific innate behaviors. Ligand-binding causes a conformation change that triggers signaling via G(s)-class of G alpha proteins (GNAL or GNAS). This is Trace amine-associated receptor 7b from Rattus norvegicus (Rat).